We begin with the raw amino-acid sequence, 136 residues long: MSLTLRVLAPDQNVFDGSADEVILPSTTGQLGILPGHISLLTAIDVGVLRVRANGGWNSIALMGGFAEVDADEVTVLVNQAELGSTIDGNTAEADFQKATTVVDGLEGQPASPEKVKAQQQLNMARARMQASKSAD.

It belongs to the ATPase epsilon chain family. In terms of assembly, F-type ATPases have 2 components, CF(1) - the catalytic core - and CF(0) - the membrane proton channel. CF(1) has five subunits: alpha(3), beta(3), gamma(1), delta(1), epsilon(1). CF(0) has three main subunits: a, b and c.

It localises to the cellular thylakoid membrane. Functionally, produces ATP from ADP in the presence of a proton gradient across the membrane. The polypeptide is ATP synthase epsilon chain (Parasynechococcus marenigrum (strain WH8102)).